We begin with the raw amino-acid sequence, 301 residues long: Transcription factor bHLH103 (301 aa).

A KRAB domain is found at 29-106 (PRSAEIVVDF…LEGLFDSSEQ (78 aa)). 2 disordered regions span residues 161-184 (EKSG…ETPS) and 239-272 (TSPH…PRQD). The 50-residue stretch at 180–229 (LETPSHFPSFKVRKEKLGDRITALQQLVSPFGKTDTASVLHDAIDYIKFL) folds into the bHLH domain. Residues 239-269 (TSPHLNSIGSGEQKQWSDKSSNNTHNQNCSP) show a composition bias toward polar residues.

As to quaternary structure, homodimer. Mature root endodermis.

Its subcellular location is the nucleus. This chain is Transcription factor bHLH103 (BHLH103), found in Arabidopsis thaliana (Mouse-ear cress).